The sequence spans 456 residues: tRNA modification GTPase MnmE (456 aa).

Residues Arg24, Glu81, and Lys120 each contribute to the (6S)-5-formyl-5,6,7,8-tetrahydrofolate site. Positions 216 to 379 constitute a TrmE-type G domain; that stretch reads GMTVVIAGRP…LRDHLKACMG (164 aa). Asn226 is a binding site for K(+). GTP contacts are provided by residues 226-231, 245-251, 270-273, and 335-338; these read NAGKSS, TAIAGTT, DTAG, and NKAD. A Mg(2+)-binding site is contributed by Ser230. Residues Thr245, Ile247, and Thr250 each coordinate K(+). Mg(2+) is bound at residue Thr251. Lys456 provides a ligand contact to (6S)-5-formyl-5,6,7,8-tetrahydrofolate.

The protein belongs to the TRAFAC class TrmE-Era-EngA-EngB-Septin-like GTPase superfamily. TrmE GTPase family. Homodimer. Heterotetramer of two MnmE and two MnmG subunits. K(+) serves as cofactor.

It is found in the cytoplasm. Exhibits a very high intrinsic GTPase hydrolysis rate. Involved in the addition of a carboxymethylaminomethyl (cmnm) group at the wobble position (U34) of certain tRNAs, forming tRNA-cmnm(5)s(2)U34. The protein is tRNA modification GTPase MnmE of Pseudomonas putida (strain W619).